Here is a 503-residue protein sequence, read N- to C-terminus: Maturase K (503 aa).

This sequence belongs to the intron maturase 2 family. MatK subfamily.

Its subcellular location is the plastid. The protein localises to the chloroplast. Its function is as follows. Usually encoded in the trnK tRNA gene intron. Probably assists in splicing its own and other chloroplast group II introns. In Aethionema cordifolium (Lebanon stonecress), this protein is Maturase K.